Reading from the N-terminus, the 126-residue chain is Copper resistance protein C (126 aa).

The N-terminal stretch at 1-23 (MSILNKAILTGGLVMGVAFSAMA) is a signal peptide. His-24 lines the Cu(2+) pocket. Cu(+) contacts are provided by Met-63, Met-66, Met-69, His-72, and Met-75. His-115 is a binding site for Cu(2+).

The protein belongs to the CopC family. In terms of assembly, monomer-dimer equilibrium in solution for the apo protein. Dimerization is significantly enhanced upon binding of copper(I).

The protein resides in the periplasm. Copper-binding protein involved in copper resistance. The polypeptide is Copper resistance protein C (Escherichia coli).